A 601-amino-acid chain; its full sequence is Abscisic acid cluster transcription factor abl7 (601 aa).

The segment at residues 13–40 (CDECRRRKLKCDRVRPQCGTCALSESEC) is a DNA-binding region (zn(2)-C6 fungal-type).

The protein resides in the nucleus. Its function is as follows. Transcription factor that regulates the expression of the gene cluster that mediates the biosynthesis of abscisic acid (ABA), a phytohormone that acts antagonistically toward salicylic acid (SA), jasmonic acid (JA) and ethylene (ETH) signaling, to impede plant defense responses. The sequence is that of Abscisic acid cluster transcription factor abl7 from Leptosphaeria maculans (strain JN3 / isolate v23.1.3 / race Av1-4-5-6-7-8) (Blackleg fungus).